A 551-amino-acid chain; its full sequence is Alkaline/neutral invertase CINV1 (551 aa).

Met-1 bears the N-acetylmethionine mark. A phosphoserine mark is found at Ser-11, Ser-14, Ser-44, and Ser-61. The interval 50–74 (TGYSRHDGIHDSPRGRSVLDTPLSS) is disordered. The span at 53–63 (SRHDGIHDSPR) shows a compositional bias: basic and acidic residues. Thr-70 carries the phosphothreonine modification. At Ser-547 the chain carries Phosphoserine.

Belongs to the glycosyl hydrolase 100 family. In terms of assembly, forms homohexamers. Interacts with PIP5K9. Interaction with PIP5K9 represses CINV1 activity. Interacts with GRF1, GRF2, GRF3, GRF4, GRF5, GRF6, GRF7, GRF8 and GRF10; these interactions are dependent of the phosphorylation at Ser-547. Post-translationally, phosphorylated at Ser-547 by CPK3 and CPK21. As to expression, expressed in radicle, hypocotyls, root tips and vascular cylinder, leaf vasculature, shoot stipules, trichomes, stem, stigma apex and base of siliques.

Its subcellular location is the cytoplasm. The protein localises to the cytosol. The protein resides in the nucleus. It carries out the reaction Hydrolysis of terminal non-reducing beta-D-fructofuranoside residues in beta-D-fructofuranosides.. Its function is as follows. Cytosolic invertase that specifically cleaves sucrose into glucose and fructose and is involved in the regulation of multiple tissue development including primary root elongation, root hair growth, leaf and silique development, and floral transition. Is involved in osmotic stress-induced inhibition on lateral root growth by controlling the concentration of hexose in cells. May regulate sugar-mediated root development by controlling sucrose catabolism in root cells. Contributes to carbon partitioning and cellulose biosynthesis in seedlings. This chain is Alkaline/neutral invertase CINV1, found in Arabidopsis thaliana (Mouse-ear cress).